We begin with the raw amino-acid sequence, 168 residues long: Nicotinamide-nucleotide adenylyltransferase (168 aa).

It belongs to the archaeal NMN adenylyltransferase family.

It is found in the cytoplasm. The enzyme catalyses beta-nicotinamide D-ribonucleotide + ATP + H(+) = diphosphate + NAD(+). The protein operates within cofactor biosynthesis; NAD(+) biosynthesis; NAD(+) from nicotinamide D-ribonucleotide: step 1/1. The polypeptide is Nicotinamide-nucleotide adenylyltransferase (Methanocorpusculum labreanum (strain ATCC 43576 / DSM 4855 / Z)).